Consider the following 207-residue polypeptide: Large ribosomal subunit protein uL4 (207 aa).

The disordered stretch occupies residues 49 to 78 (HAVKNRSAVSGGGRKPWRQKGTGRARQGSI).

Belongs to the universal ribosomal protein uL4 family. In terms of assembly, part of the 50S ribosomal subunit.

Its function is as follows. One of the primary rRNA binding proteins, this protein initially binds near the 5'-end of the 23S rRNA. It is important during the early stages of 50S assembly. It makes multiple contacts with different domains of the 23S rRNA in the assembled 50S subunit and ribosome. In terms of biological role, forms part of the polypeptide exit tunnel. The protein is Large ribosomal subunit protein uL4 of Streptococcus pyogenes serotype M49 (strain NZ131).